The following is a 280-amino-acid chain: Foldase protein PrsA 4 (280 aa).

The signal sequence occupies residues 1-21 (MKRKKLVIGSILMGMTLSLSA). C22 carries N-palmitoyl cysteine lipidation. C22 is lipidated: S-diacylglycerol cysteine. Positions 132-222 (KPKLQVSHIL…FGYHIIKLTD (91 aa)) constitute a PpiC domain.

Belongs to the PrsA family.

Its subcellular location is the cell membrane. The catalysed reaction is [protein]-peptidylproline (omega=180) = [protein]-peptidylproline (omega=0). In terms of biological role, plays a major role in protein secretion by helping the post-translocational extracellular folding of several secreted proteins. This Bacillus cereus (strain ATCC 14579 / DSM 31 / CCUG 7414 / JCM 2152 / NBRC 15305 / NCIMB 9373 / NCTC 2599 / NRRL B-3711) protein is Foldase protein PrsA 4 (prsA4).